A 397-amino-acid chain; its full sequence is Phosphoglycerate kinase (397 aa).

Residues 23–25 (DFN), Arg-38, 61–64 (HMGK), Arg-122, and Arg-155 contribute to the substrate site. ATP is bound by residues Lys-206, Gly-296, Glu-327, and 353 to 356 (GGDS).

The protein belongs to the phosphoglycerate kinase family. Monomer.

The protein localises to the cytoplasm. The enzyme catalyses (2R)-3-phosphoglycerate + ATP = (2R)-3-phospho-glyceroyl phosphate + ADP. The protein operates within carbohydrate degradation; glycolysis; pyruvate from D-glyceraldehyde 3-phosphate: step 2/5. The chain is Phosphoglycerate kinase from Clostridium perfringens (strain SM101 / Type A).